The primary structure comprises 106 residues: ATP-dependent Clp protease adapter protein ClpS (106 aa).

Residues 1–13 (MPRKTSHEHDHGL) show a composition bias toward basic and acidic residues. The tract at residues 1–21 (MPRKTSHEHDHGLVVETSKPE) is disordered.

This sequence belongs to the ClpS family. Binds to the N-terminal domain of the chaperone ClpA.

Its function is as follows. Involved in the modulation of the specificity of the ClpAP-mediated ATP-dependent protein degradation. This is ATP-dependent Clp protease adapter protein ClpS from Xanthomonas campestris pv. campestris (strain 8004).